A 98-amino-acid chain; its full sequence is uncharacterized protein (98 aa).

This is an uncharacterized protein from Sulfolobus islandicus filamentous virus (isolate Iceland/Hveragerdi) (SIFV).